The following is a 347-amino-acid chain: MKLKNIVNYLKEVGIDVELKGDDSINVDQVSGLVEAQQNHISFLSDSKRIHELETTSAGVVLIHPKFESLTTTTCLLVENPYFAFAKVSQLLNPENFPAGIHASAVVDDSAKIAESAWIGENVVIGKRVTIGDNCYIGPGSVVLDDSVIGQKTRLVANVTVMHNCIIGEEGYLDPGCVIGGQGFGFANEQGEWHKIPQIGRVVIGDRVFVGVNANIHRGAINDTVIESNCIIDSLVHIAHNVSIGYGSAIASQVGFAGSTAVGKYCVFAGQAGINGHISIADKSYFAAKSGVTHTIKESGSYSGFPAIPTPEWQKNMVRSKGLNKMAQKIKHLEKELQELKSKLEND.

Catalysis depends on His-240, which acts as the Proton acceptor.

It belongs to the transferase hexapeptide repeat family. LpxD subfamily. Homotrimer.

It catalyses the reaction a UDP-3-O-[(3R)-3-hydroxyacyl]-alpha-D-glucosamine + a (3R)-hydroxyacyl-[ACP] = a UDP-2-N,3-O-bis[(3R)-3-hydroxyacyl]-alpha-D-glucosamine + holo-[ACP] + H(+). It functions in the pathway bacterial outer membrane biogenesis; LPS lipid A biosynthesis. In terms of biological role, catalyzes the N-acylation of UDP-3-O-acylglucosamine using 3-hydroxyacyl-ACP as the acyl donor. Is involved in the biosynthesis of lipid A, a phosphorylated glycolipid that anchors the lipopolysaccharide to the outer membrane of the cell. This is UDP-3-O-acylglucosamine N-acyltransferase from Hydrogenovibrio crunogenus (strain DSM 25203 / XCL-2) (Thiomicrospira crunogena).